A 140-amino-acid polypeptide reads, in one-letter code: Smith-Magenis syndrome chromosomal region candidate gene 5 protein (140 aa).

Positions 43–77 (CTGPSSQAPPQPPQASPPAAADHSRTPSLLASSHS) are disordered. Residues 49 to 58 (QAPPQPPQAS) are compositionally biased toward pro residues.

Widely expressed.

The protein is Smith-Magenis syndrome chromosomal region candidate gene 5 protein (SMCR5) of Homo sapiens (Human).